A 455-amino-acid chain; its full sequence is Adenylyltransferase and sulfurtransferase UBA4 (455 aa).

Residues Gly-93, Asp-114, 121–125 (SNLHR), Lys-138, and 182–183 (DH) each bind ATP. Residues Cys-224 and Cys-227 each coordinate Zn(2+). Cys-241 serves as the catalytic Glycyl thioester intermediate; for adenylyltransferase activity. The Zn(2+) site is built by Cys-302 and Cys-305. The Rhodanese domain occupies 355 to 453 (QSREHTLIDV…WSEDIDAAFP (99 aa)). Cys-413 (cysteine persulfide intermediate; for sulfurtransferase activity) is an active-site residue.

The protein in the N-terminal section; belongs to the HesA/MoeB/ThiF family. UBA4 subfamily. Zn(2+) is required as a cofactor.

It is found in the cytoplasm. Its subcellular location is the cytosol. It functions in the pathway tRNA modification; 5-methoxycarbonylmethyl-2-thiouridine-tRNA biosynthesis. In terms of biological role, plays a central role in 2-thiolation of mcm(5)S(2)U at tRNA wobble positions of cytosolic tRNA(Lys), tRNA(Glu) and tRNA(Gln). Acts by mediating the C-terminal thiocarboxylation of sulfur carrier URM1. Its N-terminus first activates URM1 as acyl-adenylate (-COAMP), then the persulfide sulfur on the catalytic cysteine is transferred to URM1 to form thiocarboxylation (-COSH) of its C-terminus. The reaction probably involves hydrogen sulfide that is generated from the persulfide intermediate and that acts as a nucleophile towards URM1. Subsequently, a transient disulfide bond is formed. Does not use thiosulfate as sulfur donor; NFS1 probably acting as a sulfur donor for thiocarboxylation reactions. Prior mcm(5) tRNA modification by the elongator complex is required for 2-thiolation. May also be involved in protein urmylation. In Lodderomyces elongisporus (strain ATCC 11503 / CBS 2605 / JCM 1781 / NBRC 1676 / NRRL YB-4239) (Yeast), this protein is Adenylyltransferase and sulfurtransferase UBA4.